Reading from the N-terminus, the 231-residue chain is Superoxide dismutase [Mn] 1, mitochondrial (231 aa).

Residues 1–29 constitute a mitochondrion transit peptide; the sequence is MAIRCVASRKTLAGLKETSSRLLRIRGIQ. Residues H55 and H103 each contribute to the Mn(2+) site. Phosphoserine is present on S124. Mn(2+)-binding residues include D192 and H196.

This sequence belongs to the iron/manganese superoxide dismutase family. In terms of assembly, homotetramer. The cofactor is Mn(2+).

It localises to the mitochondrion matrix. It carries out the reaction 2 superoxide + 2 H(+) = H2O2 + O2. With respect to regulation, activated by MTM1. Destroys superoxide anion radicals which are normally produced within the cells and which are toxic to biological systems. This is Superoxide dismutase [Mn] 1, mitochondrial (MSD1) from Arabidopsis thaliana (Mouse-ear cress).